The sequence spans 1026 residues: Multidrug resistance protein MdtC (1026 aa).

The next 11 membrane-spanning stretches (helical) occupy residues 15-35 (ILIA…LPVA), 333-353 (EVEE…FLFL), 360-380 (LIPA…MYLC), 387-407 (LSLM…IVVL), 431-451 (VGFT…PLLL), 463-483 (FAVT…TLTP), 528-548 (LVGV…IAIP), 853-873 (LILI…LYES), 897-917 (LFNA…IGIV), 953-973 (PIMM…LSGG), and 984-1004 (ITIV…TPVV).

Belongs to the resistance-nodulation-cell division (RND) (TC 2.A.6) family. MdtC subfamily. Part of a tripartite efflux system composed of MdtA, MdtB and MdtC. MdtC forms a heteromultimer with MdtB.

It localises to the cell inner membrane. The protein is Multidrug resistance protein MdtC of Salmonella dublin (strain CT_02021853).